The primary structure comprises 185 residues: Inner membrane lipoprotein DcrB (185 aa).

Positions 1-19 (MRNLVKYVGIGLLVMGLAA) are cleaved as a signal peptide. A lipid anchor (N-palmitoyl cysteine) is attached at Cys-20. Residue Cys-20 is the site of S-diacylglycerol cysteine attachment.

Belongs to the DcrB family.

It is found in the cell membrane. Plays a role in cell envelope biogenesis, maintenance of cell envelope integrity and membrane homeostasis. Essential for lipoprotein maturation under conditions where membrane fluidity may be altered. The protein is Inner membrane lipoprotein DcrB of Shigella flexneri.